A 272-amino-acid chain; its full sequence is Imidazole glycerol phosphate synthase subunit HisF (272 aa).

Residues D12 and D131 contribute to the active site.

It belongs to the HisA/HisF family. Heterodimer of HisH and HisF.

It localises to the cytoplasm. The catalysed reaction is 5-[(5-phospho-1-deoxy-D-ribulos-1-ylimino)methylamino]-1-(5-phospho-beta-D-ribosyl)imidazole-4-carboxamide + L-glutamine = D-erythro-1-(imidazol-4-yl)glycerol 3-phosphate + 5-amino-1-(5-phospho-beta-D-ribosyl)imidazole-4-carboxamide + L-glutamate + H(+). Its pathway is amino-acid biosynthesis; L-histidine biosynthesis; L-histidine from 5-phospho-alpha-D-ribose 1-diphosphate: step 5/9. IGPS catalyzes the conversion of PRFAR and glutamine to IGP, AICAR and glutamate. The HisF subunit catalyzes the cyclization activity that produces IGP and AICAR from PRFAR using the ammonia provided by the HisH subunit. The polypeptide is Imidazole glycerol phosphate synthase subunit HisF (Methanopyrus kandleri (strain AV19 / DSM 6324 / JCM 9639 / NBRC 100938)).